A 208-amino-acid polypeptide reads, in one-letter code: Small ribosomal subunit protein uS4 (208 aa).

The S4 RNA-binding domain maps to 98–158 (RRLDNVVYRL…EKSRKIACIN (61 aa)).

Belongs to the universal ribosomal protein uS4 family. As to quaternary structure, part of the 30S ribosomal subunit. Contacts protein S5. The interaction surface between S4 and S5 is involved in control of translational fidelity.

Its function is as follows. One of the primary rRNA binding proteins, it binds directly to 16S rRNA where it nucleates assembly of the body of the 30S subunit. With S5 and S12 plays an important role in translational accuracy. In Geobacter metallireducens (strain ATCC 53774 / DSM 7210 / GS-15), this protein is Small ribosomal subunit protein uS4.